The chain runs to 556 residues: Putative solute carrier family 22 member 31 (556 aa).

Over Met-1–Ser-23 the chain is Cytoplasmic. The chain crosses the membrane as a helical span at residues Ala-24–Ala-44. At Gln-45–Lys-128 the chain is on the extracellular side. Residues Val-129 to Ala-149 form a helical membrane-spanning segment. At Gly-150–Arg-157 the chain is on the cytoplasmic side. Residues Ala-158 to Ala-178 traverse the membrane as a helical segment. The Extracellular segment spans residues Ser-179 to Thr-182. A helical membrane pass occupies residues Leu-183–Leu-203. Topologically, residues Ala-204 to Ser-218 are cytoplasmic. A helical membrane pass occupies residues Met-219 to Val-239. The Extracellular segment spans residues Gln-240–Gln-246. Residues Gly-247–Pro-267 traverse the membrane as a helical segment. Over Glu-268 to Gly-339 the chain is Cytoplasmic. A helical membrane pass occupies residues Leu-340–Arg-357. Topologically, residues Arg-358–Thr-366 are extracellular. A helical membrane pass occupies residues Phe-367 to Leu-387. The Cytoplasmic segment spans residues Thr-388–Arg-395. The chain crosses the membrane as a helical span at residues Pro-396–Ala-416. The Extracellular portion of the chain corresponds to Gln-417 to Pro-420. The chain crosses the membrane as a helical span at residues Gly-421–Leu-441. The Cytoplasmic segment spans residues Ser-442–Glu-448. A helical transmembrane segment spans residues Val-449–Gly-469. Residues Gln-470–Gly-483 are Extracellular-facing. Residues Phe-484 to Leu-504 form a helical membrane-spanning segment. At Leu-505–His-556 the chain is on the cytoplasmic side. Residues Arg-524 to His-556 are disordered.

It belongs to the major facilitator (TC 2.A.1) superfamily. Organic cation transporter (TC 2.A.1.19) family.

The protein localises to the membrane. In terms of biological role, organic anion transporter that mediates the uptake of ions. The sequence is that of Putative solute carrier family 22 member 31 from Homo sapiens (Human).